The primary structure comprises 185 residues: Ribosome-recycling factor (185 aa).

It belongs to the RRF family.

It localises to the cytoplasm. Functionally, responsible for the release of ribosomes from messenger RNA at the termination of protein biosynthesis. May increase the efficiency of translation by recycling ribosomes from one round of translation to another. The polypeptide is Ribosome-recycling factor (Listeria innocua serovar 6a (strain ATCC BAA-680 / CLIP 11262)).